Here is a 1481-residue protein sequence, read N- to C-terminus: Cystic fibrosis transmembrane conductance regulator (1481 aa).

The Cytoplasmic segment spans residues 1-77 (MQRSPLEKAS…KLINALRRCF (77 aa)). The helical transmembrane segment at 78 to 98 (FWRFMFYGIILYLGEVTKAVQ) threads the bilayer. The region spanning 81–365 (FMFYGIILYL…WAVQTWYDSL (285 aa)) is the ABC transmembrane type-1 1 domain. At 99–122 (PLLLGRIIASYDPDNKVERSIAIY) the chain is on the extracellular side. Residues 123–146 (LGIGLCLLFIVRTLLLHPAIFGLH) traverse the membrane as a helical segment. The Cytoplasmic segment spans residues 147 to 195 (HIGMQMRIAMFSLIYKKTLKLSSRVLDKISIGQLVSLLSNNLNKFDEGL). A helical transmembrane segment spans residues 196 to 216 (ALAHFVWIAPLQVTLLMGLLW). Topologically, residues 217-222 (ELLQAF) are extracellular. The helical transmembrane segment at 223–243 (TFCGLAFLVVLAFLQAGLGKM) threads the bilayer. Over 244 to 298 (MMKYRDQRAGKINERLVITSEIIENIQSVKAYCWEEAMEKIIENLRQTELKLTRK) the chain is Cytoplasmic. Residues 299-319 (AAYVRYLNSSAFFFSGFFVVF) form a helical membrane-spanning segment. Topologically, residues 320 to 339 (LSVLPYALLKGIILRKIFTT) are extracellular. The chain crosses the membrane as a helical span at residues 340-358 (ISFCIVLRMAVTRQFPWAV). Topologically, residues 359 to 858 (QTWYDSLGAI…YLRYITVHKS (500 aa)) are cytoplasmic. Residues Trp401, 457 to 464 (GSTGAGKT), and Gln492 each bind ATP. One can recognise an ABC transporter 1 domain in the interval 423-645 (NGDNNLFFSN…RPDFSSKLMG (223 aa)). Residue Cys523 is the site of S-palmitoyl cysteine attachment. A phosphoserine mark is found at Ser548 and Ser659. The tract at residues 653–831 (TAERRNSIIT…EEINEEDLRD (179 aa)) is disordered R region. Ser669 bears the Phosphoserine; by PKA mark. Ser685 carries the post-translational modification Phosphoserine. Lys687 is covalently cross-linked (Glycyl lysine isopeptide (Lys-Gly) (interchain with G-Cter in ubiquitin)). Phosphoserine is present on residues Ser699 and Ser711. At Thr716 the chain carries Phosphothreonine. 5 positions are modified to phosphoserine: Ser736, Ser767, Ser790, Ser795, and Ser813. A helical transmembrane segment spans residues 859–879 (LMFVLIWCLVVFLAEVAASLV). The ABC transmembrane type-1 2 domain maps to 859-1155 (LMFVLIWCLV…AVNSSIDVDS (297 aa)). Topologically, residues 880–918 (VLCLFPKILFQDKGNSTKSANNSYAVIITSTSSYYIFYI) are extracellular. Asn894 and Asn900 each carry an N-linked (GlcNAc...) asparagine glycan. The chain crosses the membrane as a discontinuously helical span at residues 919–939 (YVGVADTLLALGLFRGLPLVH). Topologically, residues 940–990 (TLITVSKTLHHKMLQSVLQAPMSTLNTLKTGGILNRFSKDIAVLDDLLPLT) are cytoplasmic. Residues 991–1011 (IFDFVQLLLIVIGAVVVVSVL) form a helical membrane-spanning segment. Residues 1012–1013 (QP) are Extracellular-facing. The helical transmembrane segment at 1014-1034 (YIFLATVPVIAAFILLRAYFL) threads the bilayer. At 1035–1095 (HTSQQLKQLE…TANWFLYLST (61 aa)) the chain is on the cytoplasmic side. The helical transmembrane segment at 1096 to 1116 (LRWFQMRIEMIFVIFFIAVTF) threads the bilayer. Topologically, residues 1117–1130 (ISILTTGEGEGRVG) are extracellular. Residues 1131–1151 (IILTLAMNIMGTLQWAVNSSI) traverse the membrane as a helical segment. Residues 1152–1481 (DVDSLMRSVS…TEEEVQETKL (330 aa)) lie on the Cytoplasmic side of the membrane. In terms of domain architecture, ABC transporter 2 spans 1211 to 1444 (MTVKDLTAKY…KSLFRQAISP (234 aa)). Residues Tyr1220 and 1245–1252 (GRTGSGKS) contribute to the ATP site. The tract at residues 1387–1481 (RTLKQAFADC…TEEEVQETKL (95 aa)) is interaction with GORASP2. The S-palmitoyl cysteine moiety is linked to residue Cys1396. The segment at 1452 to 1481 (PQRNSSRQKSRSNIAALKEETEEEVQETKL) is disordered. Low complexity predominate over residues 1453-1464 (QRNSSRQKSRSN). Position 1457 is a phosphoserine (Ser1457). Over residues 1471 to 1481 (ETEEEVQETKL) the composition is skewed to acidic residues. The PDZ-binding motif lies at 1479–1481 (TKL).

It belongs to the ABC transporter superfamily. ABCC family. CFTR transporter (TC 3.A.1.202) subfamily. Monomer; does not require oligomerization for channel activity. May form oligomers in the membrane. Interacts with SLC26A3, SLC26A6 and NHERF1. Interacts with SHANK2. Interacts with MYO6. Interacts (via C-terminus) with GOPC (via PDZ domain); this promotes CFTR internalization and thereby decreases channel activity. Interacts with SLC4A7 through NHERF1. Found in a complex with MYO5B and RAB11A. Interacts with ANO1. Interacts with SLC26A8. Interacts with AHCYL1; the interaction increases CFTR activity. Interacts with CSE1L. The core-glycosylated form interacts with GORASP2 (via PDZ GRASP-type 1 domain) in respone to ER stress. Interacts with MARCHF2; the interaction leads to CFTR ubiqtuitination and degradation. Interacts with ADGRG2. Post-translationally, N-glycosylated. Phosphorylated; cAMP treatment promotes phosphorylation and activates the channel. Dephosphorylation decreases the ATPase activity (in vitro). Phosphorylation at PKA sites activates the channel. Phosphorylation at PKC sites enhances the response to phosphorylation by PKA. Phosphorylated by AMPK; this inhibits channel activity. In terms of processing, ubiquitinated, leading to its degradation in the lysosome. Deubiquitination by USP10 in early endosomes enhances its endocytic recycling to the cell membrane. Ubiquitinated by RNF185 during ER stress. Ubiquitinated by MARCHF2.

It localises to the apical cell membrane. The protein localises to the early endosome membrane. The protein resides in the cell membrane. Its subcellular location is the recycling endosome membrane. It is found in the endoplasmic reticulum membrane. It localises to the nucleus. It catalyses the reaction ATP + H2O + closed Cl(-) channel = ADP + phosphate + open Cl(-) channel.. The enzyme catalyses chloride(in) = chloride(out). The catalysed reaction is hydrogencarbonate(in) = hydrogencarbonate(out). It carries out the reaction ATP + H2O = ADP + phosphate + H(+). Epithelial ion channel that plays an important role in the regulation of epithelial ion and water transport and fluid homeostasis. Mediates the transport of chloride ions across the cell membrane. Possesses an intrinsic ATPase activity and utilizes ATP to gate its channel; the passive flow of anions through the channel is gated by cycles of ATP binding and hydrolysis by the ATP-binding domains. The ion channel is also permeable to HCO(3)(-); selectivity depends on the extracellular chloride concentration. Exerts its function also by modulating the activity of other ion channels and transporters. Contributes to the regulation of the pH and the ion content of the epithelial fluid layer. Modulates the activity of the epithelial sodium channel (ENaC) complex, in part by regulating the cell surface expression of the ENaC complex. May regulate bicarbonate secretion and salvage in epithelial cells by regulating the transporter SLC4A7. Can inhibit the chloride channel activity of ANO1. Plays a role in the chloride and bicarbonate homeostasis during sperm epididymal maturation and capacitation. This Muntiacus muntjak (Barking deer) protein is Cystic fibrosis transmembrane conductance regulator.